A 287-amino-acid polypeptide reads, in one-letter code: Acetylglutamate kinase (287 aa).

Substrate-binding positions include 70–71 (GG), R92, and N184.

It belongs to the acetylglutamate kinase family. ArgB subfamily.

The protein localises to the cytoplasm. The enzyme catalyses N-acetyl-L-glutamate + ATP = N-acetyl-L-glutamyl 5-phosphate + ADP. It functions in the pathway amino-acid biosynthesis; L-arginine biosynthesis; N(2)-acetyl-L-ornithine from L-glutamate: step 2/4. In terms of biological role, catalyzes the ATP-dependent phosphorylation of N-acetyl-L-glutamate. The chain is Acetylglutamate kinase from Ruegeria pomeroyi (strain ATCC 700808 / DSM 15171 / DSS-3) (Silicibacter pomeroyi).